Consider the following 594-residue polypeptide: Gamma-terpinene synthase, chloroplastic (594 aa).

The N-terminal 44 residues, 1–44 (MATLSMQVSILSKEVKNVNNIGMRASKPMVARRVSTTRLRPICS), are a transit peptide targeting the chloroplast. Mn(2+)-binding residues include aspartate 347 and aspartate 351. The DDXXD motif signature appears at 347 to 351 (DDVYD). 2 homodimerization regions span residues 353 to 359 (YGTLDEL) and 425 to 462 (EAKWYYAGYTPTLAEYLENAKVSISSPTIISQVYFTLP). Mn(2+)-binding residues include aspartate 491 and glutamate 499.

This sequence belongs to the terpene synthase family. Homodimer. Requires Mn(2+) as cofactor. It depends on Mg(2+) as a cofactor. As to expression, expressed in peltate glandular trichomes.

The protein localises to the plastid. It is found in the chloroplast. It carries out the reaction (2E)-geranyl diphosphate = gamma-terpinene + diphosphate. The enzyme catalyses (2E)-geranyl diphosphate = alpha-terpinene + diphosphate. The protein operates within secondary metabolite biosynthesis; terpenoid biosynthesis. In terms of biological role, involved in the biosynthesis of phenolic monoterpenes natural products thymol and carvacrol which have a broad range of biological activities acting as antimicrobial compounds, insecticides, antioxidants and pharmaceutical agents. Monoterpene synthase which catalyzes the conversion of geranyl diphosphate (GPP) to gamma-terpinene and the minor products alpha-thujene, alpha-terpinene, myrcene, sabinene, (+)-R-limonene, alpha-pinene and alpha-phellandrene. This chain is Gamma-terpinene synthase, chloroplastic, found in Origanum vulgare (Wild marjoram).